The following is a 981-amino-acid chain: Echinoderm microtubule-associated protein-like 4 (981 aa).

Methionine 1 is subject to N-acetylmethionine. Disordered stretches follow at residues 1-20 and 57-205; these read MDGF…TSDV and DHVA…PKLI. Positions 1–249 are microtubule-binding; the sequence is MDGFAGSLDD…IPSDVDNYDD (249 aa). Serine 7, serine 13, serine 16, and serine 61 each carry phosphoserine. Positions 14–63 form a coiled coil; it reads AASTSDVQDRLSALESRVQQQEDEITVLKAALADVLRRLAISEDHVASVK. Threonine 96 bears the Phosphothreonine mark. Over residues 114–134 the composition is skewed to basic and acidic residues; it reads GTEKKKEKPQGQREKKEESHS. Serine 134 is modified (phosphoserine; by NEK7). Low complexity predominate over residues 137–155; that stretch reads QSPQIRASPSPQPSSQPLQ. Position 144 is a phosphoserine; by NEK6 (serine 144). The residue at position 146 (serine 146) is a Phosphoserine; by NEK7. At serine 171 the chain carries Phosphoserine. Positions 176–193 are enriched in basic and acidic residues; it reads SPAEKSHNSWENSDDSRN. Position 200 is a phosphoserine (serine 200). At threonine 201 the chain carries Phosphothreonine. Position 226 is a phosphotyrosine (tyrosine 226). Threonine 237 is subject to Phosphothreonine. 5 WD repeats span residues 259–297, 301–348, 356–396, 403–438, and 445–484; these read LKLE…LFNY, TQRH…VWDS, IIGL…VWDW, AEIK…FWTW, and RKQG…IWSK. At threonine 490 the chain carries Phosphothreonine; by NEK6. 8 WD repeats span residues 500-538, 543-579, 582-621, 625-662, 668-704, 711-750, 760-818, and 825-864; these read QISK…LWDH, EREI…LRGT, DGFQ…LWNS, RLEW…VLDA, VSIH…LYVV, YSRY…YWDI, RSDC…LFQY, and APSH…QWKL. Residue threonine 609 is modified to Phosphothreonine; by NEK6 and NEK7. Residues 881-893 are compositionally biased toward polar residues; it reads LTKAPVSSTESVI. Residues 881–981 are disordered; the sequence is LTKAPVSSTE…EDQQDPSPSS (101 aa). 2 positions are modified to phosphoserine: serine 891 and serine 895. Phosphothreonine is present on residues threonine 897 and threonine 899. Serine 903 carries the post-translational modification Phosphoserine. Polar residues predominate over residues 916–931; that stretch reads ISSSPTLLENSLEQTV. The segment covering 937 to 946 has biased composition (acidic residues); sequence HSEEESEEGS. A Phosphoserine modification is found at serine 978. Serine 981 is subject to Phosphoserine; by NEK6 and NEK7.

It belongs to the WD repeat EMAP family. As to quaternary structure, homotrimer; self-association is mediated by the N-terminal coiled coil. Interacts (via WD repeats) with NUDC. Interacts with alpha- and beta-tubulin during mitosis. In terms of processing, phosphorylated during mitosis. Phosphorylation at Ser-144 and Ser-146 promotes its dissociation from microtubules during mitosis which is required for efficient chromosome congression.

The protein resides in the cytoplasm. It localises to the cytoskeleton. Its subcellular location is the spindle. It is found in the microtubule organizing center. The protein localises to the midbody. Essential for the formation and stability of microtubules (MTs). Required for the organization of the mitotic spindle and for the proper attachment of kinetochores to MTs. Promotes the recruitment of NUDC to the mitotic spindle for mitotic progression. The chain is Echinoderm microtubule-associated protein-like 4 (EML4) from Homo sapiens (Human).